Reading from the N-terminus, the 336-residue chain is L-Ala-D/L-amino acid epimerase (336 aa).

Substrate contacts are provided by residues T130 and 152–154 (KIK). Positions 178, 204, and 229 each coordinate Mg(2+). Substrate is bound by residues K251 and 301 to 303 (DMD).

It belongs to the mandelate racemase/muconate lactonizing enzyme family. The cofactor is Mg(2+).

Catalyzes the epimerization of D-Ala-D-Ala to D-Ala-L-Ala. Has broad substrate specificity and catalyzes the epimerization of a variety of dipeptides containing an N-terminal Ala followed by Ser, Thr, Val, Met, His, Phe or Trp (in vitro). The polypeptide is L-Ala-D/L-amino acid epimerase (Flavobacterium johnsoniae (strain ATCC 17061 / DSM 2064 / JCM 8514 / BCRC 14874 / CCUG 350202 / NBRC 14942 / NCIMB 11054 / UW101) (Cytophaga johnsonae)).